The chain runs to 427 residues: 3-phosphoshikimate 1-carboxyvinyltransferase (427 aa).

K20, S21, and R25 together coordinate 3-phosphoshikimate. K20 serves as a coordination point for phosphoenolpyruvate. Phosphoenolpyruvate-binding residues include G92 and R120. 3-phosphoshikimate is bound by residues S166, Q168, D312, and K339. Q168 serves as a coordination point for phosphoenolpyruvate. The active-site Proton acceptor is D312. R343 and R385 together coordinate phosphoenolpyruvate.

The protein belongs to the EPSP synthase family. Monomer.

It is found in the cytoplasm. It carries out the reaction 3-phosphoshikimate + phosphoenolpyruvate = 5-O-(1-carboxyvinyl)-3-phosphoshikimate + phosphate. It participates in metabolic intermediate biosynthesis; chorismate biosynthesis; chorismate from D-erythrose 4-phosphate and phosphoenolpyruvate: step 6/7. Functionally, catalyzes the transfer of the enolpyruvyl moiety of phosphoenolpyruvate (PEP) to the 5-hydroxyl of shikimate-3-phosphate (S3P) to produce enolpyruvyl shikimate-3-phosphate and inorganic phosphate. This is 3-phosphoshikimate 1-carboxyvinyltransferase from Streptococcus equi subsp. zooepidemicus (strain H70).